Here is a 338-residue protein sequence, read N- to C-terminus: Ketol-acid reductoisomerase (NADP(+)) (338 aa).

Residues 1-181 (MKVFYDKDCD…GGGRAGIIET (181 aa)) form the KARI N-terminal Rossmann domain. NADP(+)-binding positions include 24–27 (YGSQ), arginine 47, and serine 52. Residue histidine 107 is part of the active site. Glycine 133 lines the NADP(+) pocket. Residues 182 to 327 (NFREETETDL…GKLRAMMPWI (146 aa)) enclose the KARI C-terminal knotted domain. Aspartate 190, glutamate 194, glutamate 226, and glutamate 230 together coordinate Mg(2+). Serine 251 provides a ligand contact to substrate.

The protein belongs to the ketol-acid reductoisomerase family. It depends on Mg(2+) as a cofactor.

It catalyses the reaction (2R)-2,3-dihydroxy-3-methylbutanoate + NADP(+) = (2S)-2-acetolactate + NADPH + H(+). The enzyme catalyses (2R,3R)-2,3-dihydroxy-3-methylpentanoate + NADP(+) = (S)-2-ethyl-2-hydroxy-3-oxobutanoate + NADPH + H(+). It functions in the pathway amino-acid biosynthesis; L-isoleucine biosynthesis; L-isoleucine from 2-oxobutanoate: step 2/4. It participates in amino-acid biosynthesis; L-valine biosynthesis; L-valine from pyruvate: step 2/4. In terms of biological role, involved in the biosynthesis of branched-chain amino acids (BCAA). Catalyzes an alkyl-migration followed by a ketol-acid reduction of (S)-2-acetolactate (S2AL) to yield (R)-2,3-dihydroxy-isovalerate. In the isomerase reaction, S2AL is rearranged via a Mg-dependent methyl migration to produce 3-hydroxy-3-methyl-2-ketobutyrate (HMKB). In the reductase reaction, this 2-ketoacid undergoes a metal-dependent reduction by NADPH to yield (R)-2,3-dihydroxy-isovalerate. The sequence is that of Ketol-acid reductoisomerase (NADP(+)) from Bordetella bronchiseptica (strain ATCC BAA-588 / NCTC 13252 / RB50) (Alcaligenes bronchisepticus).